Reading from the N-terminus, the 142-residue chain is Ovocleidin-17 (142 aa).

3 disulfides stabilise this stretch: cysteine 5/cysteine 16, cysteine 33/cysteine 138, and cysteine 113/cysteine 130. The C-type lectin domain occupies 12–139 (TPGGCLGFFS…CTERNAFVCK (128 aa)). Residue asparagine 59 is glycosylated (N-linked (GlcNAc...) asparagine). Serine 61 and serine 67 each carry phosphoserine.

Expressed in the shell gland mucosa. Not detected in hen liver, magnum, isthmus, cartilage, bone or in egg white or yolk.

The protein localises to the secreted. The protein resides in the extracellular space. Its subcellular location is the extracellular matrix. In terms of biological role, may form proteinaceous networks during the construction of the eggshell which then may control the deposition of the mineral phase. The polypeptide is Ovocleidin-17 (Gallus gallus (Chicken)).